Reading from the N-terminus, the 410-residue chain is Cysteine desulfurase IscS (410 aa).

Pyridoxal 5'-phosphate contacts are provided by residues 80 to 81, N160, Q188, and 208 to 210; these read AT and SGH. Residue K211 is modified to N6-(pyridoxal phosphate)lysine. Residue T248 participates in pyridoxal 5'-phosphate binding. C334 acts as the Cysteine persulfide intermediate in catalysis. C334 contacts [2Fe-2S] cluster.

It belongs to the class-V pyridoxal-phosphate-dependent aminotransferase family. NifS/IscS subfamily. Homodimer. Forms a heterotetramer with IscU, interacts with other sulfur acceptors. The cofactor is pyridoxal 5'-phosphate.

It is found in the cytoplasm. It carries out the reaction (sulfur carrier)-H + L-cysteine = (sulfur carrier)-SH + L-alanine. Its pathway is cofactor biosynthesis; iron-sulfur cluster biosynthesis. In terms of biological role, master enzyme that delivers sulfur to a number of partners involved in Fe-S cluster assembly, tRNA modification or cofactor biosynthesis. Catalyzes the removal of elemental sulfur atoms from cysteine to produce alanine. Functions as a sulfur delivery protein for Fe-S cluster synthesis onto IscU, an Fe-S scaffold assembly protein, as well as other S acceptor proteins. The sequence is that of Cysteine desulfurase IscS from Rickettsia typhi (strain ATCC VR-144 / Wilmington).